The following is a 400-amino-acid chain: Putative transposase for insertion sequence element IS5376 (400 aa).

Residues 5–67 enclose the HTH IS21-type domain; it reads GEFFMIKEMY…PFKPYLQKRM (63 aa). The segment at residues 20–39 is a DNA-binding region (H-T-H motif); sequence ISDIARELGIDRKTVRKYIH. A disordered region spans residues 35–55; the sequence is RKYIHSPNPPSKSKRKQRKSK. One can recognise an Integrase catalytic domain in the interval 113 to 287; it reads YETLPGEQMQ…SPQERWAEES (175 aa).

This sequence belongs to the transposase IS21/IS408/IS1162 family.

Its function is as follows. Involved in the transposition of the insertion sequence. The sequence is that of Putative transposase for insertion sequence element IS5376 from Geobacillus stearothermophilus (Bacillus stearothermophilus).